A 213-amino-acid polypeptide reads, in one-letter code: dITP/XTP pyrophosphatase (213 aa).

7-12 (TSNLDK) contributes to the substrate binding site. The active-site Proton acceptor is the Asp-74. Asp-74 is a binding site for Mg(2+). Residues Ser-75, 165–168 (FGYD), Lys-188, and 193–194 (HR) contribute to the substrate site.

Belongs to the HAM1 NTPase family. In terms of assembly, homodimer. Mg(2+) serves as cofactor.

It carries out the reaction XTP + H2O = XMP + diphosphate + H(+). The enzyme catalyses dITP + H2O = dIMP + diphosphate + H(+). The catalysed reaction is ITP + H2O = IMP + diphosphate + H(+). Its function is as follows. Pyrophosphatase that catalyzes the hydrolysis of nucleoside triphosphates to their monophosphate derivatives, with a high preference for the non-canonical purine nucleotides XTP (xanthosine triphosphate), dITP (deoxyinosine triphosphate) and ITP. Seems to function as a house-cleaning enzyme that removes non-canonical purine nucleotides from the nucleotide pool, thus preventing their incorporation into DNA/RNA and avoiding chromosomal lesions. This Campylobacter concisus (strain 13826) protein is dITP/XTP pyrophosphatase.